We begin with the raw amino-acid sequence, 503 residues long: Na(+)-translocating NADH-quinone reductase subunit B (503 aa).

Transmembrane regions (helical) follow at residues 55-75 (MMLV…NSGL), 94-114 (ISGF…VPIL), 120-140 (IFIP…VLFA), 161-181 (TLPP…GIVV), and 186-206 (FGGT…FLFF). At threonine 248 the chain carries FMN phosphoryl threonine. Transmembrane regions (helical) follow at residues 361-381 (TSTF…IASW), 386-406 (AFGI…VLIV), 417-437 (FFIP…LVFM), 452-472 (WIYG…NPAY), and 475-495 (GVML…YFAV).

This sequence belongs to the NqrB/RnfD family. Composed of six subunits; NqrA, NqrB, NqrC, NqrD, NqrE and NqrF. It depends on FMN as a cofactor.

The protein resides in the cell inner membrane. The enzyme catalyses a ubiquinone + n Na(+)(in) + NADH + H(+) = a ubiquinol + n Na(+)(out) + NAD(+). In terms of biological role, NQR complex catalyzes the reduction of ubiquinone-1 to ubiquinol by two successive reactions, coupled with the transport of Na(+) ions from the cytoplasm to the periplasm. NqrA to NqrE are probably involved in the second step, the conversion of ubisemiquinone to ubiquinol. The sequence is that of Na(+)-translocating NADH-quinone reductase subunit B from Chlamydia pneumoniae (Chlamydophila pneumoniae).